Here is a 92-residue protein sequence, read N- to C-terminus: MNRLLQRQLFLENLLVGVNSTFHQMQKHSINTCCRSLQRILDHLILLQTIHSPVFRLDRMQLRQMQTLACLWIHRRNHDLQVTLGAIKWISP.

It belongs to the rotavirus A NSP6 family. As to quaternary structure, interacts with NSP2 and NSP5.

Its subcellular location is the host cytoplasm. The protein localises to the host mitochondrion. The chain is Non-structural protein 6 from Rotavirus A (strain RVA/Pig/Mexico/YM/1983/G11P9[7]) (RV-A).